The following is a 322-amino-acid chain: Tropinone reductase homolog At2g29260, chloroplastic (322 aa).

The transit peptide at 1–61 (MVLDMASHLY…YASQSSIAIT (61 aa)) directs the protein to the chloroplast. 74 to 98 (LVTGGTRGIGRAIVEELAGLGAEVH) serves as a coordination point for NADP(+). Substrate is bound at residue Ser207.

The protein belongs to the short-chain dehydrogenases/reductases (SDR) family. SDR65C subfamily.

It localises to the plastid. The protein resides in the chloroplast. In Arabidopsis thaliana (Mouse-ear cress), this protein is Tropinone reductase homolog At2g29260, chloroplastic.